An 861-amino-acid polypeptide reads, in one-letter code: MTGRARARARGRARGQETAQLVGSTASQQPGYIQPRPQPPPAEGELFGRGRQRGTAGGTAKSQGLQISAGFQELSLAERGGRRRDFHDLGVNTRQNLDHVKESKTGSSGIIVRLSTNHFRLTSRPQWALYQYHIDYNPLMEARRLRSALLFQHEDLIGKCHAFDGTILFLPKRLQQKVTEVFSKTRNGEDVRITITLTNELPPTSPTCLQFYNIIFRRLLKIMNLQQIGRNYYNPNDPIDIPSHRLVIWPGFTTSILQYENSIMLCTDVSHKVLRSETVLDFMFNFYHQTEEHKFQEQVSKELIGLVVLTKYNNKTYRVDDIDWDQNPKSTFKKADGSEVSFLEYYRKQYNQEITDLKQPVLVSQPKRRRGPGGTLPGPAMLIPELCYLTGLTDKMRNDFNVMKDLAVHTRLTPEQRQREVGRLIDYIHKNDNVQRELRDWGLSFDSNLLSFSGRILQTEKIHQGGKTFDYNPQFADWSKETRGAPLISVKPLDNWLLIYTRRNYEAANSLIQNLFKVTPAMGMQMRKAIMIEVDDRTEAYLRVLQQKVTADTQIVVCLLSSNRKDKYDAIKKYLCTDCPTPSQCVVARTLGKQQTVMAIATKIALQMNCKMGGELWRVDIPLKLVMIVGIDCYHDMTAGRRSIAGFVASINEGMTRWFSRCIFQDRGQELVDGLKVCLQAALRAWNSCNEYMPSRIIVYRDGVGDGQLKTLVNYEVPQFLDCLKSIGRGYNPRLTVIVVKKRVNTRFFAQSGGRLQNPLPGTVIDVEVTRPEWYDFFIVSQAVRSGSVSPTHYNVIYDNSGLKPDHIQRLTYKLCHIYYNWPGVIRVPAPCQYAHKLAFLVGQSIHREPNLSLSNRLYYL.

A compositionally biased stretch (basic residues) spans 1-13; the sequence is MTGRARARARGRA. Residues 1–64 form a disordered region; the sequence is MTGRARARAR…TAGGTAKSQG (64 aa). At Arg-14 the chain carries Omega-N-methylarginine; by PRMT5; alternate. Arg-14 carries the post-translational modification Symmetric dimethylarginine; by PRMT5; alternate. Positions 17–27 are enriched in polar residues; it reads ETAQLVGSTAS. At Arg-49 the chain carries Omega-N-methylarginine; by PRMT5. Position 53 is an omega-N-methylarginine; alternate (Arg-53). Residue Arg-53 is modified to Symmetric dimethylarginine; alternate. The D-box signature appears at 217–224; it reads RRLLKIMN. A PAZ domain is found at 278–391; the sequence is TVLDFMFNFY…LIPELCYLTG (114 aa). Residues 316 to 318 are required for binding 2'-O-methylated 3'-end of piRNAs; that stretch reads TYR. Arg-370 is subject to Omega-N-methylarginine; by PRMT5. Positions 479–615 are MID region; sequence SKETRGAPLI…LQMNCKMGGE (137 aa). A Piwi domain is found at 555-847; that stretch reads IVVCLLSSNR…LAFLVGQSIH (293 aa). Residues Asp-632, Glu-670, Asp-702, and His-836 contribute to the active site.

Belongs to the argonaute family. Piwi subfamily. As to quaternary structure, interacts (via Piwi domain) with DICER1, suggesting that it forms ribonucleoprotein RISC complexes; this interaction is regulated by HSP90AB1 activity. Interacts with MAEL, KIF17, PABPC1, PRMT5 and WDR77. Interacts (when methylated on arginine residues) with TDRD1, TDRKH/TDRD2, RNF17/TDRD4, TDRD6, TDRD7 and TDRD9. Interacts with CLOCK. Interacts with MOV10L1. Interacts with ANAPC10; interaction oly takes place following piRNA-binding. Interacts with RNF8; leading to sequester RNF8 in the cytoplasm. Interacts with TEX19. Requires Mg(2+) as cofactor. Arginine methylation by PRMT5 is required for the interaction with Tudor domain-containing protein (TDRD1, TDRKH/TDRD2, RNF17/TDRD4, TDRD6, TDRD7 and TDRD9) and subsequent localization to the meiotic nuage, also named P granule. Post-translationally, ubiquitinated by the anaphase promoting complex/cyclosome (APC/C) in late spermatids, leading to its degradation. Ubiquitination only takes place following piRNA-binding in adult testis. Ubiquitination and degradation in late spermatogenesis by APC/C is probably required to release RNF8 from the cytoplasm and promote histone to protamine exchange by RNF8. Expressed in spermatocytes and spermatids. Also detected in prostate cancer (at protein level). Detected in most fetal and adult tissues. Expressed in testes, specifically in germline cells; detected in spermatocytes and spermatids during spermatogenesis. Increased expression in testicular tumors originating from embryonic germ cells with retention of germ cells phenotype. No expression in testicular tumors of somatic origin, such as Sertoli cell and Leydig cell tumors. Overexpressed in gastric cancer cells. Isoform 3: Ubiquitously expressed, and specifically in CD34(+) hematopoietic progenitor cells but not in more differentiated cells.

It is found in the cytoplasm. In terms of biological role, endoribonuclease that plays a central role in postnatal germ cells by repressing transposable elements and preventing their mobilization, which is essential for the germline integrity. Acts via the piRNA metabolic process, which mediates the repression of transposable elements during meiosis by forming complexes composed of piRNAs and Piwi proteins and governs the methylation and subsequent repression of transposons. Directly binds methylated piRNAs, a class of 24 to 30 nucleotide RNAs that are generated by a Dicer-independent mechanism and are primarily derived from transposons and other repeated sequence elements. Strongly prefers a uridine in the first position of their guide (g1U preference, also named 1U-bias). Not involved in the piRNA amplification loop, also named ping-pong amplification cycle. Acts as an endoribonuclease that cleaves transposon messenger RNAs. Besides their function in transposable elements repression, piRNAs are probably involved in other processes during meiosis such as translation regulation. Probable component of some RISC complex, which mediates RNA cleavage and translational silencing. Also plays a role in the formation of chromatoid bodies and is required for some miRNAs stability. Required to sequester RNF8 in the cytoplasm until late spermatogenesis; RNF8 being released upon ubiquitination and degradation of PIWIL1. May be a negative developmental regulator. The chain is Piwi-like protein 1 (PIWIL1) from Homo sapiens (Human).